Here is a 220-residue protein sequence, read N- to C-terminus: MFLRRMKAELINPEQALPGRPIAMPVADRHEVLGTPLAGPFPEGTQVAVFGMGCFWGAERLFWTLPGVLTTSVGYAGGYTPNPSYEEVCSGRTGHAEVVQVRYDPTKIAYEDLLKVFWENHDPTQGMRQGNDVGTQYRSAIYTTTEEQLTAAQASRDAFAPVVARAGKGEITTEIGPLGDYYFAEDYHQQYLAPTKNPGGYCNHGPNGLSCPVGVARTTG.

Cys-54 is a catalytic residue.

This sequence belongs to the MsrA Met sulfoxide reductase family.

The catalysed reaction is L-methionyl-[protein] + [thioredoxin]-disulfide + H2O = L-methionyl-(S)-S-oxide-[protein] + [thioredoxin]-dithiol. The enzyme catalyses [thioredoxin]-disulfide + L-methionine + H2O = L-methionine (S)-S-oxide + [thioredoxin]-dithiol. Functionally, has an important function as a repair enzyme for proteins that have been inactivated by oxidation. Catalyzes the reversible oxidation-reduction of methionine sulfoxide in proteins to methionine. The protein is Peptide methionine sulfoxide reductase MsrA of Salinispora arenicola (strain CNS-205).